The primary structure comprises 591 residues: DDB1- and CUL4-associated factor 8 (591 aa).

Positions 1 to 14 (MSSKRPSTDGRRDL) are enriched in basic and acidic residues. A disordered region spans residues 1-140 (MSSKRPSTDG…EDWVSSETTA (140 aa)). A phosphoserine mark is found at Ser21 and Ser22. Positions 39 to 50 (IEVEASDLSLSL) match the Nuclear export signal motif. Basic and acidic residues-rich tracts occupy residues 65–99 (RGTD…HGHS) and 118–131 (SRDQ…RALE). Residues Ser99, Ser123, and Ser124 each carry the phosphoserine modification. WD repeat units follow at residues 185–224 (GHTG…PVLD), 228–269 (GHKS…CCKN), 275–315 (QHKG…PASK), 323–363 (EKKV…ENEN), 379–418 (ESKA…GAQY), 426–466 (RNNA…IIQF), and 470–509 (DKGG…STEL). Arg198 carries the omega-N-methylarginine; by PRMT1 modification. Positions 552 to 591 (HRRWREPGVGATDADSDESPSSSDTSDEEEGPDRVQCMPS) are disordered.

Belongs to the WD repeat DCAF8 family. Interacts with DDB1, CUL4A and CUL4B. Interacts with KPNA1, KPNB1 and XPO1.

It localises to the nucleus. Its subcellular location is the cytoplasm. It participates in protein modification; protein ubiquitination. May function as a substrate receptor for CUL4-DDB1 E3 ubiquitin-protein ligase complex. The sequence is that of DDB1- and CUL4-associated factor 8 (Dcaf8) from Rattus norvegicus (Rat).